A 1232-amino-acid polypeptide reads, in one-letter code: DNA topoisomerase 2 (1232 aa).

Residues asparagine 65, asparagine 94, 122-124 (SSN), 135-142 (GRHGYGAK), and 352-354 (QNK) each bind ATP. The region spanning 432-546 (RTLIVTEGDS…SLLNRNPGFI (115 aa)) is the Toprim domain. Glutamate 438, aspartate 515, and aspartate 517 together coordinate Mg(2+). The Topo IIA-type catalytic domain maps to 681–1097 (LAHAVDGLKP…APVQMWLDEL (417 aa)). Residue tyrosine 771 is the O-(5'-phospho-DNA)-tyrosine intermediate of the active site. The interaction with DNA stretch occupies residues 952-961 (SLTQRIYING). Positions 1161–1184 (YVPPPPSKRPHVGQSVGGGGGGGS) are disordered. Gly residues predominate over residues 1175-1184 (SVGGGGGGGS).

This sequence belongs to the type II topoisomerase family. In terms of assembly, homodimer. Requires Mg(2+) as cofactor. Mn(2+) is required as a cofactor. The cofactor is Ca(2+).

It localises to the nucleus. It carries out the reaction ATP-dependent breakage, passage and rejoining of double-stranded DNA.. In terms of biological role, control of topological states of DNA by transient breakage and subsequent rejoining of DNA strands. Topoisomerase II makes double-strand breaks. The chain is DNA topoisomerase 2 (TOP2) from Trypanosoma cruzi.